We begin with the raw amino-acid sequence, 556 residues long: tRNA (guanine(37)-N(1))-methyltransferase (556 aa).

Residues 1–30 constitute a mitochondrion transit peptide; it reads MIITTKALTVLPHSGLRTTHRSLLARLRHY. Residues H249, 287–288, 315–316, and N346 contribute to the S-adenosyl-L-methionine site; these read DL and DA. Disordered regions lie at residues 444–465 and 524–556; these read QHEE…KMKD and KKAA…EMQM. Basic and acidic residues-rich tracts occupy residues 454-465 and 540-549; these read EEAKRPSNKMKD and SKPDTKKIEA.

The protein belongs to the class I-like SAM-binding methyltransferase superfamily. TRM5/TYW2 family. As to quaternary structure, monomer.

It localises to the mitochondrion matrix. Its subcellular location is the nucleus. The protein localises to the cytoplasm. It carries out the reaction guanosine(37) in tRNA + S-adenosyl-L-methionine = N(1)-methylguanosine(37) in tRNA + S-adenosyl-L-homocysteine + H(+). In terms of biological role, specifically methylates the N1 position of guanosine-37 in various cytoplasmic and mitochondrial tRNAs. Methylation is not dependent on the nature of the nucleoside 5' of the target nucleoside. This is the first step in the biosynthesis of wybutosine (yW), a modified base adjacent to the anticodon of tRNAs and required for accurate decoding. This is tRNA (guanine(37)-N(1))-methyltransferase from Anopheles gambiae (African malaria mosquito).